Consider the following 550-residue polypeptide: Arginine--tRNA ligase (550 aa).

The 'HIGH' region motif lies at 123-133 (ANPTGYLHIAH).

It belongs to the class-I aminoacyl-tRNA synthetase family. In terms of assembly, monomer.

The protein resides in the cytoplasm. The catalysed reaction is tRNA(Arg) + L-arginine + ATP = L-arginyl-tRNA(Arg) + AMP + diphosphate. The protein is Arginine--tRNA ligase of Ureaplasma parvum serovar 3 (strain ATCC 27815 / 27 / NCTC 11736).